The sequence spans 425 residues: Ribosomal protein uS12 methylthiotransferase RimO (425 aa).

Residues 2 to 115 (KNFTVITLGC…IIDYIKQFSK (114 aa)) enclose the MTTase N-terminal domain. [4Fe-4S] cluster contacts are provided by cysteine 11, cysteine 47, cysteine 78, cysteine 142, cysteine 146, and cysteine 149. Residues 128 to 357 (VEPPSYRYIK…MARQAVISLE (230 aa)) enclose the Radical SAM core domain. In terms of domain architecture, TRAM spans 360–425 (RALIGKKYEA…YEYDVKGVIV (66 aa)).

The protein belongs to the methylthiotransferase family. RimO subfamily. [4Fe-4S] cluster serves as cofactor.

Its subcellular location is the cytoplasm. It catalyses the reaction L-aspartate(89)-[ribosomal protein uS12]-hydrogen + (sulfur carrier)-SH + AH2 + 2 S-adenosyl-L-methionine = 3-methylsulfanyl-L-aspartate(89)-[ribosomal protein uS12]-hydrogen + (sulfur carrier)-H + 5'-deoxyadenosine + L-methionine + A + S-adenosyl-L-homocysteine + 2 H(+). Functionally, catalyzes the methylthiolation of an aspartic acid residue of ribosomal protein uS12. The sequence is that of Ribosomal protein uS12 methylthiotransferase RimO from Thermodesulfovibrio yellowstonii (strain ATCC 51303 / DSM 11347 / YP87).